The chain runs to 256 residues: Imidazole glycerol phosphate synthase subunit HisF (256 aa).

Residues aspartate 12 and aspartate 131 contribute to the active site.

Belongs to the HisA/HisF family. Heterodimer of HisH and HisF.

It localises to the cytoplasm. It catalyses the reaction 5-[(5-phospho-1-deoxy-D-ribulos-1-ylimino)methylamino]-1-(5-phospho-beta-D-ribosyl)imidazole-4-carboxamide + L-glutamine = D-erythro-1-(imidazol-4-yl)glycerol 3-phosphate + 5-amino-1-(5-phospho-beta-D-ribosyl)imidazole-4-carboxamide + L-glutamate + H(+). Its pathway is amino-acid biosynthesis; L-histidine biosynthesis; L-histidine from 5-phospho-alpha-D-ribose 1-diphosphate: step 5/9. Functionally, IGPS catalyzes the conversion of PRFAR and glutamine to IGP, AICAR and glutamate. The HisF subunit catalyzes the cyclization activity that produces IGP and AICAR from PRFAR using the ammonia provided by the HisH subunit. The chain is Imidazole glycerol phosphate synthase subunit HisF from Bifidobacterium adolescentis (strain ATCC 15703 / DSM 20083 / NCTC 11814 / E194a).